Consider the following 548-residue polypeptide: Membrane protein insertase YidC (548 aa).

Residues 6–26 (NLLVIALLFVSFMIWQAWEQD) traverse the membrane as a helical segment. Residues 28–56 (NPQPQTQQTTQTTTTAAGSAADQGVPASG) form a disordered region. Low complexity predominate over residues 29-42 (PQPQTQQTTQTTTT). The next 4 membrane-spanning stretches (helical) occupy residues 350 to 370 (FVGN…GIMY), 424 to 444 (FPLI…MGSI), 458 to 478 (LSAQ…MFFI), and 499 to 519 (PVIF…YYIV).

Belongs to the OXA1/ALB3/YidC family. Type 1 subfamily. As to quaternary structure, interacts with the Sec translocase complex via SecD. Specifically interacts with transmembrane segments of nascent integral membrane proteins during membrane integration.

It is found in the cell inner membrane. Its function is as follows. Required for the insertion and/or proper folding and/or complex formation of integral membrane proteins into the membrane. Involved in integration of membrane proteins that insert both dependently and independently of the Sec translocase complex, as well as at least some lipoproteins. Aids folding of multispanning membrane proteins. The protein is Membrane protein insertase YidC of Salmonella choleraesuis (strain SC-B67).